A 337-amino-acid polypeptide reads, in one-letter code: UDP-N-acetylenolpyruvoylglucosamine reductase (337 aa).

In terms of domain architecture, FAD-binding PCMH-type spans 17–186 (IEAKAKQFIA…TSVIYKLTKR (170 aa)). Arg162 is an active-site residue. Catalysis depends on Ser237, which acts as the Proton donor. Glu333 is a catalytic residue.

Belongs to the MurB family. FAD serves as cofactor.

The protein localises to the cytoplasm. The enzyme catalyses UDP-N-acetyl-alpha-D-muramate + NADP(+) = UDP-N-acetyl-3-O-(1-carboxyvinyl)-alpha-D-glucosamine + NADPH + H(+). Its pathway is cell wall biogenesis; peptidoglycan biosynthesis. Its function is as follows. Cell wall formation. The protein is UDP-N-acetylenolpyruvoylglucosamine reductase of Flavobacterium johnsoniae (strain ATCC 17061 / DSM 2064 / JCM 8514 / BCRC 14874 / CCUG 350202 / NBRC 14942 / NCIMB 11054 / UW101) (Cytophaga johnsonae).